A 320-amino-acid chain; its full sequence is Beta-carotene ketolase (320 aa).

The catalysed reaction is all-trans-beta-carotene + 2 AH2 + 2 O2 = echinenone + 2 A + 3 H2O. The enzyme catalyses echinenone + 2 AH2 + 2 O2 = canthaxanthin + 2 A + 3 H2O. It participates in carotenoid biosynthesis; astaxanthin biosynthesis. Its function is as follows. Converts beta-carotene to canthaxanthin via echinenone. In Haematococcus lacustris (Green alga), this protein is Beta-carotene ketolase.